We begin with the raw amino-acid sequence, 429 residues long: 3-phosphoshikimate 1-carboxyvinyltransferase (429 aa).

Residues Lys11, Ser12, and Arg16 each coordinate 3-phosphoshikimate. A phosphoenolpyruvate-binding site is contributed by Lys11. Phosphoenolpyruvate is bound by residues Gly82 and Arg110. 3-phosphoshikimate-binding residues include Ser155, Gln157, Asp302, and Lys329. Gln157 provides a ligand contact to phosphoenolpyruvate. Asp302 serves as the catalytic Proton acceptor. Arg333 and Arg385 together coordinate phosphoenolpyruvate.

Belongs to the EPSP synthase family. Monomer.

The protein localises to the cytoplasm. The catalysed reaction is 3-phosphoshikimate + phosphoenolpyruvate = 5-O-(1-carboxyvinyl)-3-phosphoshikimate + phosphate. The protein operates within metabolic intermediate biosynthesis; chorismate biosynthesis; chorismate from D-erythrose 4-phosphate and phosphoenolpyruvate: step 6/7. Functionally, catalyzes the transfer of the enolpyruvyl moiety of phosphoenolpyruvate (PEP) to the 5-hydroxyl of shikimate-3-phosphate (S3P) to produce enolpyruvyl shikimate-3-phosphate and inorganic phosphate. In Helicobacter pylori (strain ATCC 700392 / 26695) (Campylobacter pylori), this protein is 3-phosphoshikimate 1-carboxyvinyltransferase.